We begin with the raw amino-acid sequence, 471 residues long: Adenosylhomocysteinase (471 aa).

Residues T60, D135, and E196 each contribute to the substrate site. 197-199 is a binding site for NAD(+); it reads TTT. Substrate is bound by residues K226 and D230. NAD(+) is bound by residues N231, 260–265, E283, N318, 339–341, and N387; these read GYGDVG and IGH.

The protein belongs to the adenosylhomocysteinase family. It depends on NAD(+) as a cofactor.

It localises to the cytoplasm. The enzyme catalyses S-adenosyl-L-homocysteine + H2O = L-homocysteine + adenosine. The protein operates within amino-acid biosynthesis; L-homocysteine biosynthesis; L-homocysteine from S-adenosyl-L-homocysteine: step 1/1. In terms of biological role, may play a key role in the regulation of the intracellular concentration of adenosylhomocysteine. This is Adenosylhomocysteinase from Chlorobium luteolum (strain DSM 273 / BCRC 81028 / 2530) (Pelodictyon luteolum).